Consider the following 750-residue polypeptide: Cullin-5 (750 aa).

Positions 678–739 constitute a Cullin neddylation domain; sequence RFFKLQAAIV…QEYIRRTTDD (62 aa). Residue Lys691 forms a Glycyl lysine isopeptide (Lys-Gly) (interchain with G-Cter in NEDD8) linkage.

Belongs to the cullin family. Neddylated; which enhances the ubiquitination activity of SCF-like complex.

Its pathway is protein modification; protein ubiquitination. Probable core component of cullin-based SCF-like E3 ubiquitin-protein ligase complexes which mediate the ubiquitination and subsequent proteasomal degradation of target proteins. The E3 ubiquitin-protein ligase activity of the complex is dependent on the neddylation of the cullin subunit. This chain is Cullin-5 (culE), found in Dictyostelium discoideum (Social amoeba).